The primary structure comprises 489 residues: Homoserine O-acetyltransferase (489 aa).

One can recognise an AB hydrolase-1 domain in the interval 63-435; it reads NALVICHALS…SPEGHDAFLL (373 aa). The active site involves Ser-162. Catalysis depends on Ser-162, which acts as the Nucleophile. Residues 247-272 are disordered; that stretch reads RFGRNVPDPSKRQNINGTERLPTPPN. Catalysis depends on residues Asp-401 and His-430.

It belongs to the AB hydrolase superfamily. MetX family.

It carries out the reaction L-homoserine + acetyl-CoA = O-acetyl-L-homoserine + CoA. Its pathway is amino-acid biosynthesis; L-methionine biosynthesis via de novo pathway; O-acetyl-L-homoserine from L-homoserine: step 1/1. Functionally, commits homoserine to the methionine biosynthesis pathway by catalyzing its O-acetylation. In Emericella nidulans (strain FGSC A4 / ATCC 38163 / CBS 112.46 / NRRL 194 / M139) (Aspergillus nidulans), this protein is Homoserine O-acetyltransferase (metE).